Consider the following 472-residue polypeptide: Squamosa promoter-binding-like protein 18 (472 aa).

The interval 89–110 (AKVPPSTSTLKRPRGGGGGGGG) is disordered. The SBP-type zinc-finger motif lies at 112 to 189 (CPSCAVDGCK…DGHNRRRRKP (78 aa)). Cys-115, Cys-120, Cys-137, His-140, Cys-156, Cys-159, His-163, and Cys-175 together coordinate Zn(2+). The Bipartite nuclear localization signal signature appears at 172–188 (KRSCRKRLDGHNRRRRK). Disordered stretches follow at residues 179 to 218 (LDGH…RPEP), 233 to 261 (SHHH…TAAF), and 358 to 381 (SVDV…HHHH). Residues 192-209 (DSMSSGSFMTSQQGTRFA) are compositionally biased toward polar residues. Low complexity predominate over residues 252-261 (SPSSATTAAF).

Expressed in young panicles.

The protein resides in the nucleus. Its function is as follows. Trans-acting factor that binds specifically to the consensus nucleotide sequence 5'-TNCGTACAA-3'. May be involved in panicle development. This is Squamosa promoter-binding-like protein 18 (SPL18) from Oryza sativa subsp. japonica (Rice).